The primary structure comprises 89 residues: Small ribosomal subunit protein bS16 (89 aa).

This sequence belongs to the bacterial ribosomal protein bS16 family.

The chain is Small ribosomal subunit protein bS16 from Anaplasma marginale (strain Florida).